The chain runs to 646 residues: Macrolide export ATP-binding/permease protein MacB (646 aa).

An ABC transporter domain is found at 5–243 (IELKGVSRTY…TLPKTNRIRQ (239 aa)). An ATP-binding site is contributed by 41-48 (GASGSGKS). Transmembrane regions (helical) follow at residues 272–292 (TLTM…VALG), 518–538 (FSIL…IGVM), 570–590 (IIEA…LSYI), and 611–631 (AAVA…YLPA).

This sequence belongs to the ABC transporter superfamily. Macrolide exporter (TC 3.A.1.122) family. As to quaternary structure, homodimer. Part of the tripartite efflux system MacAB-TolC, which is composed of an inner membrane transporter, MacB, a periplasmic membrane fusion protein, MacA, and an outer membrane component, TolC. The complex forms a large protein conduit and can translocate molecules across both the inner and outer membranes. Interacts with MacA.

The protein resides in the cell inner membrane. Functionally, part of the tripartite efflux system MacAB-TolC. MacB is a non-canonical ABC transporter that contains transmembrane domains (TMD), which form a pore in the inner membrane, and an ATP-binding domain (NBD), which is responsible for energy generation. Confers resistance against macrolides. This chain is Macrolide export ATP-binding/permease protein MacB, found in Escherichia coli.